Reading from the N-terminus, the 74-residue chain is Translation initiation factor IF-1 (74 aa).

The S1-like domain maps to 1–72 (MAKQDAIEME…TKGRITYRLR (72 aa)).

This sequence belongs to the IF-1 family. Component of the 30S ribosomal translation pre-initiation complex which assembles on the 30S ribosome in the order IF-2 and IF-3, IF-1 and N-formylmethionyl-tRNA(fMet); mRNA recruitment can occur at any time during PIC assembly.

Its subcellular location is the cytoplasm. One of the essential components for the initiation of protein synthesis. Stabilizes the binding of IF-2 and IF-3 on the 30S subunit to which N-formylmethionyl-tRNA(fMet) subsequently binds. Helps modulate mRNA selection, yielding the 30S pre-initiation complex (PIC). Upon addition of the 50S ribosomal subunit IF-1, IF-2 and IF-3 are released leaving the mature 70S translation initiation complex. The chain is Translation initiation factor IF-1 from Acaryochloris marina (strain MBIC 11017).